A 523-amino-acid chain; its full sequence is Maltose/maltodextrin transport system permease protein MalF (523 aa).

Over 1–22 the chain is Cytoplasmic; that stretch reads MQSVQGTDAMTAPAASLPGSKK. A helical transmembrane segment spans residues 23-45; sequence VFIKWALLGTVGLINGYATILMY. Topologically, residues 46–49 are periplasmic; the sequence is SRGE. The chain crosses the membrane as a helical span at residues 50–69; that stretch reads VAFAMLTVILTALALYVFGS. Residues 70–81 are Cytoplasmic-facing; sequence KKTYAHRYIYPG. A helical transmembrane segment spans residues 82–104; it reads IAGMILFILFPLAYTVGLAFTNY. Residues 105-288 lie on the Periplasmic side of the membrane; the sequence is SAKNQLSLDR…DDGIKEPFIS (184 aa). Residues 289-311 form a helical membrane-spanning segment; sequence IFIWTVVFSILTVLLTLMIGLVL. Positions 290–514 constitute an ABC transmembrane type-1 domain; sequence FIWTVVFSIL…LLVGALALLN (225 aa). Residues 312–322 lie on the Cytoplasmic side of the membrane; sequence ASVVQWEELKG. Residues 323–345 traverse the membrane as a helical segment; sequence RAIYRVLLILPYAVPAFISILIF. The Periplasmic segment spans residues 346–378; it reads KGLFNQSFGEINMVLNALFGISPSWFSDPIMAK. A helical transmembrane segment spans residues 379-401; that stretch reads SMVLIVNTWLGFPYMMILCMGLL. Residues 402–434 lie on the Cytoplasmic side of the membrane; it reads KAIPEDLYEASAIDGANFVQNFTRVTLPLMIKP. The chain crosses the membrane as a helical span at residues 435–457; it reads LTPLLIASFAFNFNNFVMIQLLT. Residues 458–492 lie on the Periplasmic side of the membrane; that stretch reads QGGPNMIGTSEPAGYTDLLVSYTYRIAFEGGGGQD. The helical transmembrane segment at 493 to 515 threads the bilayer; sequence FGLASAIATLIFLLVGALALLNL. The Cytoplasmic segment spans residues 516 to 523; it reads RFTKLSQN.

This sequence belongs to the binding-protein-dependent transport system permease family. MalFG subfamily. In terms of assembly, the complex is composed of two ATP-binding proteins (MalK), two transmembrane proteins (MalG and MalF) and a solute-binding protein (MalE).

Its subcellular location is the cell inner membrane. Functionally, part of the ABC transporter complex MalEFGK involved in maltose/maltodextrin import. Probably responsible for the translocation of the substrate across the membrane. This is Maltose/maltodextrin transport system permease protein MalF (malF) from Vibrio vulnificus (strain CMCP6).